Consider the following 303-residue polypeptide: US1 protein (303 aa).

The tract at residues 230 to 284 is disordered; that stretch reads IPAPGRPLPRRRPSEGGMRAPRRRSRAPAPARSTAAAATPPRPGDPRAPAARRAG. The span at 256-268 shows a compositional bias: low complexity; sequence APAPARSTAAAAT.

This sequence belongs to the herpesviridae US2 family.

The protein is US1 protein (US1) of Equine herpesvirus 1 (strain Kentucky A) (EHV-1).